The chain runs to 771 residues: Caldesmon (771 aa).

Disordered stretches follow at residues 23–91 (ERLS…ALLE) and 104–599 (LQEA…FSPK). The interval 26–199 (SYQRNDDDEE…PKEVPTEENQ (174 aa)) is myosin and calmodulin-binding. A Phosphotyrosine modification is found at Tyr-27. 9 stretches are compositionally biased toward basic and acidic residues: residues 47 to 67 (QERLRQKEEGDVSGEVTEKSE), 104 to 115 (LQEALERQKEFD), 139 to 155 (ITGKEEKVETRQGRCEI), 170 to 194 (WRQDGEEEGKKEEKDSEEEKPKEVP), 203 to 215 (AVEKSTDKEEVVE), 240 to 435 (AADK…ESLP), 442 to 484 (SKKD…RELT), 509 to 518 (GSEKLKEKQQ), and 525 to 592 (DELK…EKKP). Tandem repeats lie at residues 251–265 (EREKLEAEEKERLKA), 266–278 (EEEKKAAEEKQKA), 279–291 (EEEKKAAEERERA), 294–306 (EEEKRAAEERERA), 309–321 (EEERKAAEERERA), 324–336 (EEERKAAEERAKA), 337–349 (EEERKAAEERAKA), 350–362 (EEERKAAEERAKA), 363–375 (EKERKAAEERERA), and 378–390 (EEEKRAAEEKARL). The interval 251–390 (EREKLEAEEK…KRAAEEKARL (140 aa)) is 10 X 13 AA approximate tandem repeats. The tropomyosin-binding stretch occupies residues 523 to 580 (ELDELKKRREERRKILEEEEQKKKQEEAERKIREEEEKKRMKEEIERRRAEAAEKRQK). Ser-597 is subject to Phosphoserine; by CDK1. The segment at 612 to 644 (LNKSAQKSGMKPAHTTAVVSKIDSRLEQYTSAV) is strong actin-binding. The segment at 622–632 (KPAHTTAVVSK) is tropomyosin-binding. The residue at position 640 (Tyr-640) is a Phosphotyrosine. A calmodulin-binding region spans residues 674 to 680 (WEKGNVF). The interval 676–771 (KGNVFSSPGG…NGLRQFEKEP (96 aa)) is disordered. A compositionally biased stretch (polar residues) spans 679–691 (VFSSPGGTGTPNK). Ser-682 carries the phosphoserine; by CDK1 modification. Phosphothreonine; by CDK1 occurs at positions 688 and 711. Ser-717 carries the post-translational modification Phosphoserine; by CDK1. Positions 723-742 (SDLRPGDVSGKRNLWEKQSV) are enriched in basic and acidic residues. The tract at residues 726 to 752 (RPGDVSGKRNLWEKQSVEKPAASSSKV) is weak actin-binding.

This sequence belongs to the caldesmon family. Phosphorylated in non-muscle cells. Phosphorylation by CDK1 during mitosis causes caldesmon to dissociate from microfilaments. Phosphorylation reduces caldesmon binding to actin, myosin, and calmodulin as well as its inhibition of actomyosin ATPase activity. Phosphorylation also occurs in both quiescent and dividing smooth muscle cells with similar effects on the interaction with actin and calmodulin and on microfilaments reorganization. High-molecular-weight caldesmon (h-caldesmon) is predominantly expressed in smooth muscles, whereas low-molecular-weight caldesmon (l-caldesmon) is widely distributed in non-muscle tissues and cells. Not expressed in skeletal muscle or heart.

The protein localises to the cytoplasm. The protein resides in the cytoskeleton. Its subcellular location is the myofibril. It is found in the stress fiber. Actin- and myosin-binding protein implicated in the regulation of actomyosin interactions in smooth muscle and nonmuscle cells (could act as a bridge between myosin and actin filaments). Stimulates actin binding of tropomyosin which increases the stabilization of actin filament structure. In muscle tissues, inhibits the actomyosin ATPase by binding to F-actin. This inhibition is attenuated by calcium-calmodulin and is potentiated by tropomyosin. Interacts with actin, myosin, two molecules of tropomyosin and with calmodulin. Also plays an essential role during cellular mitosis and receptor capping. The sequence is that of Caldesmon (CALD1) from Gallus gallus (Chicken).